Reading from the N-terminus, the 318-residue chain is Acetyl-coenzyme A carboxylase carboxyl transferase subunit alpha (318 aa).

Residues 31-292 form the CoA carboxyltransferase C-terminal domain; the sequence is DLIKEVSALE…KDAILRQLEL (262 aa).

It belongs to the AccA family. Acetyl-CoA carboxylase is a heterohexamer composed of biotin carboxyl carrier protein (AccB), biotin carboxylase (AccC) and two subunits each of ACCase subunit alpha (AccA) and ACCase subunit beta (AccD).

It is found in the cytoplasm. It catalyses the reaction N(6)-carboxybiotinyl-L-lysyl-[protein] + acetyl-CoA = N(6)-biotinyl-L-lysyl-[protein] + malonyl-CoA. It participates in lipid metabolism; malonyl-CoA biosynthesis; malonyl-CoA from acetyl-CoA: step 1/1. In terms of biological role, component of the acetyl coenzyme A carboxylase (ACC) complex. First, biotin carboxylase catalyzes the carboxylation of biotin on its carrier protein (BCCP) and then the CO(2) group is transferred by the carboxyltransferase to acetyl-CoA to form malonyl-CoA. This Hydrogenovibrio crunogenus (strain DSM 25203 / XCL-2) (Thiomicrospira crunogena) protein is Acetyl-coenzyme A carboxylase carboxyl transferase subunit alpha.